We begin with the raw amino-acid sequence, 84 residues long: UPF0473 protein CLJ_B2791 (84 aa).

The protein belongs to the UPF0473 family.

The polypeptide is UPF0473 protein CLJ_B2791 (Clostridium botulinum (strain 657 / Type Ba4)).